A 297-amino-acid chain; its full sequence is Ribosomal RNA small subunit methyltransferase H (297 aa).

S-adenosyl-L-methionine contacts are provided by residues 37–39 (GGH), E56, F87, D102, and H109.

The protein belongs to the methyltransferase superfamily. RsmH family.

The protein localises to the cytoplasm. The catalysed reaction is cytidine(1402) in 16S rRNA + S-adenosyl-L-methionine = N(4)-methylcytidine(1402) in 16S rRNA + S-adenosyl-L-homocysteine + H(+). Functionally, specifically methylates the N4 position of cytidine in position 1402 (C1402) of 16S rRNA. The protein is Ribosomal RNA small subunit methyltransferase H of Borrelia recurrentis (strain A1).